A 97-amino-acid polypeptide reads, in one-letter code: Conotoxin Cal6.1e (97 aa).

The signal sequence occupies residues 1–22 (MKLTTVLIVAVLVLAACQFTVT). Residues 23–49 (DNSGDDTENPSLRSAGENQNPDSTKTI) form a disordered region. A propeptide spanning residues 23–60 (DNSGDDTENPSLRSAGENQNPDSTKTITARATRARTNM) is cleaved from the precursor. Residues 31–45 (NPSLRSAGENQNPDS) are compositionally biased toward polar residues. Cystine bridges form between C71–C87, C78–C91, and C86–C96.

The protein belongs to the conotoxin O1 superfamily. As to expression, expressed by the venom duct.

The protein localises to the secreted. Its function is as follows. Probable neurotoxin with unknown target. Possibly targets ion channels. The polypeptide is Conotoxin Cal6.1e (Californiconus californicus (California cone)).